The following is a 190-amino-acid chain: Ribosome hibernation promotion factor (190 aa).

Belongs to the HPF/YfiA ribosome-associated protein family. Long HPF subfamily. Interacts with 100S ribosomes.

Its subcellular location is the cytoplasm. Functionally, required for dimerization of active 70S ribosomes into 100S ribosomes in stationary phase; 100S ribosomes are translationally inactive and sometimes present during exponential growth. The chain is Ribosome hibernation promotion factor from Staphylococcus aureus (strain COL).